Reading from the N-terminus, the 375-residue chain is GDP-mannose-dependent alpha-mannosyltransferase (375 aa).

This sequence belongs to the glycosyltransferase group 1 family. Glycosyltransferase 4 subfamily.

Its pathway is phospholipid metabolism; phosphatidylinositol metabolism. Functionally, catalyzes the addition of a mannose residue from GDP-D-mannose to GlcAGroAc2 to generate 1,2-di-O-C16/C18:1-(alpha-D-mannopyranosyl)-(1-4)-(alpha-D-glucopyranosyluronic acid)-(1-3)-glycerol(ManGlcAGroAc2). The protein is GDP-mannose-dependent alpha-mannosyltransferase (mgtA) of Mycolicibacterium smegmatis (strain ATCC 700084 / mc(2)155) (Mycobacterium smegmatis).